The sequence spans 94 residues: Large ribosomal subunit protein bL25 (94 aa).

The protein belongs to the bacterial ribosomal protein bL25 family. As to quaternary structure, part of the 50S ribosomal subunit; part of the 5S rRNA/L5/L18/L25 subcomplex. Contacts the 5S rRNA. Binds to the 5S rRNA independently of L5 and L18.

Its function is as follows. This is one of the proteins that binds to the 5S RNA in the ribosome where it forms part of the central protuberance. The sequence is that of Large ribosomal subunit protein bL25 from Salmonella gallinarum (strain 287/91 / NCTC 13346).